The following is a 247-amino-acid chain: 2,3-bisphosphoglycerate-dependent phosphoglycerate mutase (247 aa).

Residues 8–15, 21–22, Arg60, 87–90, Lys98, 114–115, and 183–184 contribute to the substrate site; these read RHGESQWN, TG, ERHY, RR, and GN. His9 functions as the Tele-phosphohistidine intermediate in the catalytic mechanism. Glu87 acts as the Proton donor/acceptor in catalysis.

It belongs to the phosphoglycerate mutase family. BPG-dependent PGAM subfamily.

It carries out the reaction (2R)-2-phosphoglycerate = (2R)-3-phosphoglycerate. The protein operates within carbohydrate degradation; glycolysis; pyruvate from D-glyceraldehyde 3-phosphate: step 3/5. Catalyzes the interconversion of 2-phosphoglycerate and 3-phosphoglycerate. In Chlorobium limicola (strain DSM 245 / NBRC 103803 / 6330), this protein is 2,3-bisphosphoglycerate-dependent phosphoglycerate mutase.